The chain runs to 321 residues: Lipoyl synthase (321 aa).

C68, C73, C79, C94, C98, C101, and S308 together coordinate [4Fe-4S] cluster. Positions 80 to 297 (FNHGTATFMI…KELAESIGFT (218 aa)) constitute a Radical SAM core domain.

It belongs to the radical SAM superfamily. Lipoyl synthase family. Requires [4Fe-4S] cluster as cofactor.

It localises to the cytoplasm. It carries out the reaction [[Fe-S] cluster scaffold protein carrying a second [4Fe-4S](2+) cluster] + N(6)-octanoyl-L-lysyl-[protein] + 2 oxidized [2Fe-2S]-[ferredoxin] + 2 S-adenosyl-L-methionine + 4 H(+) = [[Fe-S] cluster scaffold protein] + N(6)-[(R)-dihydrolipoyl]-L-lysyl-[protein] + 4 Fe(3+) + 2 hydrogen sulfide + 2 5'-deoxyadenosine + 2 L-methionine + 2 reduced [2Fe-2S]-[ferredoxin]. It participates in protein modification; protein lipoylation via endogenous pathway; protein N(6)-(lipoyl)lysine from octanoyl-[acyl-carrier-protein]: step 2/2. Functionally, catalyzes the radical-mediated insertion of two sulfur atoms into the C-6 and C-8 positions of the octanoyl moiety bound to the lipoyl domains of lipoate-dependent enzymes, thereby converting the octanoylated domains into lipoylated derivatives. In Shewanella halifaxensis (strain HAW-EB4), this protein is Lipoyl synthase.